Reading from the N-terminus, the 37-residue chain is MKVKPSVKPICDKCKVIRRHGRVMVICENLRHKQRQG.

The protein belongs to the bacterial ribosomal protein bL36 family.

This chain is Large ribosomal subunit protein bL36, found in Beutenbergia cavernae (strain ATCC BAA-8 / DSM 12333 / CCUG 43141 / JCM 11478 / NBRC 16432 / NCIMB 13614 / HKI 0122).